Consider the following 276-residue polypeptide: WIMGHMVNKIEQINEFLDLGANSIEVDIAFDELGYPEYTYHGVPCDCKRYCTKSEKIDDFIEALSAATTPGNPKFRKELTLVVFDLKTGGFDASRMYKSGKAFAELIQFSYWKGSDDAGRAYIVLSLPKLDHYEFIKAFREHFDTSTFKNLLEERVGYDFSGNEDMGLTRVVLDKAGVNDREHVWQGDGITNCILRSLDRVKAAVAIRDSATGYINKVYFWTIQAYSSVRDALNAEVDGIMTNEPDVIANILKEDAFKDRFRLATYRDNPWETFKR.

Residue H5 is part of the active site. Mg(2+) contacts are provided by E25 and D27. H41 functions as the Nucleophile in the catalytic mechanism. Disulfide bonds link C45-C51 and C47-C193. D85 is a Mg(2+) binding site.

Belongs to the arthropod phospholipase D family. Class II subfamily. The cofactor is Mg(2+). In terms of tissue distribution, expressed by the venom gland.

The protein localises to the secreted. The enzyme catalyses an N-(acyl)-sphingosylphosphocholine = an N-(acyl)-sphingosyl-1,3-cyclic phosphate + choline. It catalyses the reaction an N-(acyl)-sphingosylphosphoethanolamine = an N-(acyl)-sphingosyl-1,3-cyclic phosphate + ethanolamine. It carries out the reaction a 1-acyl-sn-glycero-3-phosphocholine = a 1-acyl-sn-glycero-2,3-cyclic phosphate + choline. The catalysed reaction is a 1-acyl-sn-glycero-3-phosphoethanolamine = a 1-acyl-sn-glycero-2,3-cyclic phosphate + ethanolamine. Dermonecrotic toxins cleave the phosphodiester linkage between the phosphate and headgroup of certain phospholipids (sphingolipid and lysolipid substrates), forming an alcohol (often choline) and a cyclic phosphate. This toxin acts on sphingomyelin (SM). It may also act on ceramide phosphoethanolamine (CPE), lysophosphatidylcholine (LPC) and lysophosphatidylethanolamine (LPE), but not on lysophosphatidylserine (LPS), and lysophosphatidylglycerol (LPG). It acts by transphosphatidylation, releasing exclusively cyclic phosphate products as second products. Induces dermonecrosis, hemolysis, increased vascular permeability, edema, inflammatory response, and platelet aggregation. This Loxosceles laeta (South American recluse spider) protein is Dermonecrotic toxin LlSicTox-alphaIV2iii.